The primary structure comprises 315 residues: tRNA dimethylallyltransferase (315 aa).

13–20 (GPTAVGKT) contributes to the ATP binding site. 15-20 (TAVGKT) contributes to the substrate binding site. Residues 38 to 41 (DSMQ) form an interaction with substrate tRNA region.

Belongs to the IPP transferase family. In terms of assembly, monomer. The cofactor is Mg(2+).

The enzyme catalyses adenosine(37) in tRNA + dimethylallyl diphosphate = N(6)-dimethylallyladenosine(37) in tRNA + diphosphate. Catalyzes the transfer of a dimethylallyl group onto the adenine at position 37 in tRNAs that read codons beginning with uridine, leading to the formation of N6-(dimethylallyl)adenosine (i(6)A). This chain is tRNA dimethylallyltransferase, found in Staphylococcus saprophyticus subsp. saprophyticus (strain ATCC 15305 / DSM 20229 / NCIMB 8711 / NCTC 7292 / S-41).